Consider the following 2194-residue polypeptide: Nucleosome-remodeling factor subunit NURF301-like (2194 aa).

A compositionally biased stretch (basic residues) spans 1–12 (MAPPRGRSKRKH). The tract at residues 1–137 (MAPPRGRSKR…EEEESSDDEF (137 aa)) is disordered. Basic and acidic residues predominate over residues 60 to 79 (AQRETPSDAEEVEVKIEEIS). The segment covering 80–93 (VRSTPASTPAPKST) has biased composition (polar residues). Residues 94–112 (SKARGRPKKNPTPPRRKSL) show a composition bias toward basic residues. Over residues 118–137 (DIIYMDEDSEEEEESSDDEF) the composition is skewed to acidic residues. DDT domains are found at residues 196-256 (TASI…SDDE) and 341-396 (VGKF…SAVR). The PHD-type 1 zinc-finger motif lies at 347-392 (DENCRVCGKSSGRVVGCTQCEAAFHVECSHLKPFPEVLVCNICKKN). 5 disordered regions span residues 1091 to 1122 (ESWLSRNRGGSSEFSHRSSSARKKRPQRSLDN), 1158 to 1255 (AKRK…PQPN), 1413 to 1433 (TSNFDAQRAQQQHPQSRPVYS), 1657 to 1701 (MRQE…SNDS), and 1834 to 1888 (ESIA…HTPG). The stretch at 1151–1187 (RAEAEKTAKRKLEATRKAQKAKEDEERRRIQQQQQRS) forms a coiled coil. The span at 1158–1179 (AKRKLEATRKAQKAKEDEERRR) shows a compositional bias: basic and acidic residues. Polar residues predominate over residues 1665–1684 (TSGYDSSGNPIRSITSSGDT). Over residues 1852 to 1861 (KSEDDRDKPE) the composition is skewed to basic and acidic residues. 2 DDT domains span residues 1883–1953 (AFHT…EQER) and 1948–2014 (IEEQ…AEGY). PHD-type zinc fingers lie at residues 1899 to 1950 (IEHC…CIEE) and 1959 to 2010 (ALYC…CTRE). The region spanning 2030–2134 (QLTRADYTHV…EVFDKKLIDV (105 aa)) is the Bromo domain.

The protein belongs to the BPTF family. Part of a nucleosome remodeling factor-like (NURF-like) complex containing nurf-1 and isw-1.

It is found in the nucleus. Functionally, histone-binding component of a NURF-like (nucleosome remodeling factor-like) complex, which would catalyze ATP-dependent nucleosome sliding and facilitate transcription of chromatin. Involved in vulval cell fates. The sequence is that of Nucleosome-remodeling factor subunit NURF301-like (nurf-1) from Caenorhabditis elegans.